The primary structure comprises 123 residues: Probable cytochrome c 2.2 (123 aa).

The tract at residues 1–21 (MGKKKSDTASGGAIPEGDNEK) is disordered. Positions 30, 33, 34, and 95 each coordinate heme c.

The protein belongs to the cytochrome c family. Binds 1 heme c group covalently per subunit.

It localises to the mitochondrion intermembrane space. Electron carrier protein. The oxidized form of the cytochrome c heme group can accept an electron from the heme group of the cytochrome c1 subunit of cytochrome reductase. Cytochrome c then transfers this electron to the cytochrome oxidase complex, the final protein carrier in the mitochondrial electron-transport chain. In Caenorhabditis elegans, this protein is Probable cytochrome c 2.2 (cyc-2.2).